Reading from the N-terminus, the 212-residue chain is MSDTSIKQQSQLTSGDFTAAENPFELFAEWLAEADRSEPNDPNAMALATVDSDGLPDVRMVLMKGYDADGFVFYSHIASQKGRELTANPKAALLFHWKSLRRQVRIRGTVTPVSDAEADAYFATRPKQAQIGAWASKQSQPLESRFAFEQAIAKVAARYLIGEVPRPPGWSGWRITPSRVEFWHDRPFRLHDRIEFNRDTPAQPWTKTRLYP.

Residues 59-64 (RMVLMK), 74-75 (YS), Lys-81, and Gln-103 each bind FMN. Substrate is bound at residue Lys-64. Substrate-binding residues include Tyr-121 and Arg-125. Residues 138–139 (QS) and Trp-183 each bind FMN. Position 189–191 (189–191 (RLH)) interacts with substrate. Arg-193 contributes to the FMN binding site.

This sequence belongs to the pyridoxamine 5'-phosphate oxidase family. In terms of assembly, homodimer. Requires FMN as cofactor.

The catalysed reaction is pyridoxamine 5'-phosphate + O2 + H2O = pyridoxal 5'-phosphate + H2O2 + NH4(+). It carries out the reaction pyridoxine 5'-phosphate + O2 = pyridoxal 5'-phosphate + H2O2. It functions in the pathway cofactor metabolism; pyridoxal 5'-phosphate salvage; pyridoxal 5'-phosphate from pyridoxamine 5'-phosphate: step 1/1. Its pathway is cofactor metabolism; pyridoxal 5'-phosphate salvage; pyridoxal 5'-phosphate from pyridoxine 5'-phosphate: step 1/1. Catalyzes the oxidation of either pyridoxine 5'-phosphate (PNP) or pyridoxamine 5'-phosphate (PMP) into pyridoxal 5'-phosphate (PLP). The protein is Pyridoxine/pyridoxamine 5'-phosphate oxidase of Rhodopseudomonas palustris (strain HaA2).